A 641-amino-acid chain; its full sequence is Macrolide export ATP-binding/permease protein MacB (641 aa).

An ABC transporter domain is found at 2–236 (IFLKNICKNI…LILKTMPKEK (235 aa)). Position 34–41 (34–41 (GQSGSGKT)) interacts with ATP. The next 4 helical transmembrane spans lie at 265–285 (ILTMLGIIIGIASVVCVVALG), 519–539 (ACVAVIALIVGGIGVMNIMLV), 571–591 (MICTIGAILGVILSIFVIFAF), and 604–624 (AYSVLLGLLSSMFIGVVFGFF).

Belongs to the ABC transporter superfamily. Macrolide exporter (TC 3.A.1.122) family. In terms of assembly, homodimer.

Its subcellular location is the cell inner membrane. Its function is as follows. Non-canonical ABC transporter that contains transmembrane domains (TMD), which form a pore in the inner membrane, and an ATP-binding domain (NBD), which is responsible for energy generation. Confers resistance against macrolides. The sequence is that of Macrolide export ATP-binding/permease protein MacB from Campylobacter jejuni subsp. jejuni serotype O:2 (strain ATCC 700819 / NCTC 11168).